Here is a 513-residue protein sequence, read N- to C-terminus: Histidine ammonia-lyase (513 aa).

The segment at residues 142–144 is a cross-link (5-imidazolinone (Ala-Gly)); sequence ASG. A 2,3-didehydroalanine (Ser) modification is found at Ser143.

The protein belongs to the PAL/histidase family. Post-translationally, contains an active site 4-methylidene-imidazol-5-one (MIO), which is formed autocatalytically by cyclization and dehydration of residues Ala-Ser-Gly.

The protein localises to the cytoplasm. It catalyses the reaction L-histidine = trans-urocanate + NH4(+). The protein operates within amino-acid degradation; L-histidine degradation into L-glutamate; N-formimidoyl-L-glutamate from L-histidine: step 1/3. The chain is Histidine ammonia-lyase from Mesorhizobium japonicum (strain LMG 29417 / CECT 9101 / MAFF 303099) (Mesorhizobium loti (strain MAFF 303099)).